A 146-amino-acid chain; its full sequence is Large ribosomal subunit protein uL15 (146 aa).

The interval 1 to 54 (MKLHELQPAAGSRKAPKRVGRGTGSGLGRNAGKGEKGQNARSGGGVRPGFEGGQ) is disordered. Gly residues-rich tracts occupy residues 21-31 (RGTGSGLGRNA) and 42-52 (SGGGVRPGFEG).

Belongs to the universal ribosomal protein uL15 family. In terms of assembly, part of the 50S ribosomal subunit.

Its function is as follows. Binds to the 23S rRNA. The polypeptide is Large ribosomal subunit protein uL15 (Clostridium botulinum (strain Alaska E43 / Type E3)).